The primary structure comprises 174 residues: Co-chaperone protein HscB homolog (174 aa).

In terms of domain architecture, J spans 2-74; the sequence is NYFELFKFSP…IRRAEHMLSL (73 aa).

This sequence belongs to the HscB family. Interacts with HscA and stimulates its ATPase activity.

Co-chaperone involved in the maturation of iron-sulfur cluster-containing proteins. Seems to help targeting proteins to be folded toward HscA. The polypeptide is Co-chaperone protein HscB homolog (Shewanella baltica (strain OS155 / ATCC BAA-1091)).